The sequence spans 83 residues: Small ribosomal subunit protein bS16 (83 aa).

The protein belongs to the bacterial ribosomal protein bS16 family.

This Shewanella denitrificans (strain OS217 / ATCC BAA-1090 / DSM 15013) protein is Small ribosomal subunit protein bS16.